Consider the following 620-residue polypeptide: 1-deoxy-D-xylulose-5-phosphate synthase (620 aa).

Residues His-80 and 121 to 123 (GHS) each bind thiamine diphosphate. Asp-152 contributes to the Mg(2+) binding site. Thiamine diphosphate contacts are provided by residues 153–154 (GA), Asn-181, Tyr-288, and Glu-370. Asn-181 is a binding site for Mg(2+).

The protein belongs to the transketolase family. DXPS subfamily. Homodimer. The cofactor is Mg(2+). Thiamine diphosphate is required as a cofactor.

It carries out the reaction D-glyceraldehyde 3-phosphate + pyruvate + H(+) = 1-deoxy-D-xylulose 5-phosphate + CO2. The protein operates within metabolic intermediate biosynthesis; 1-deoxy-D-xylulose 5-phosphate biosynthesis; 1-deoxy-D-xylulose 5-phosphate from D-glyceraldehyde 3-phosphate and pyruvate: step 1/1. Functionally, catalyzes the acyloin condensation reaction between C atoms 2 and 3 of pyruvate and glyceraldehyde 3-phosphate to yield 1-deoxy-D-xylulose-5-phosphate (DXP). In Klebsiella pneumoniae (strain 342), this protein is 1-deoxy-D-xylulose-5-phosphate synthase.